Here is a 273-residue protein sequence, read N- to C-terminus: Large ribosomal subunit protein uL2 (273 aa).

The tract at residues 228–273 is disordered; the sequence is VDHPHGGGEGKTSGGRHPVTPWGFPTKGKKTRKNKRTSKFIVKKRK. The segment covering 254-273 has biased composition (basic residues); sequence KGKKTRKNKRTSKFIVKKRK.

The protein belongs to the universal ribosomal protein uL2 family. Part of the 50S ribosomal subunit. Forms a bridge to the 30S subunit in the 70S ribosome.

One of the primary rRNA binding proteins. Required for association of the 30S and 50S subunits to form the 70S ribosome, for tRNA binding and peptide bond formation. It has been suggested to have peptidyltransferase activity; this is somewhat controversial. Makes several contacts with the 16S rRNA in the 70S ribosome. In Rickettsia africae (strain ESF-5), this protein is Large ribosomal subunit protein uL2.